We begin with the raw amino-acid sequence, 234 residues long: Sugar fermentation stimulation protein A (234 aa).

The segment at residues 201–220 (LLSEAQNKGVEVLAYKAELS) is a DNA-binding region (H-T-H motif).

The protein belongs to the SfsA family.

Its function is as follows. Binds to DNA non-specifically. Could be a regulatory factor involved in maltose metabolism. In Salmonella arizonae (strain ATCC BAA-731 / CDC346-86 / RSK2980), this protein is Sugar fermentation stimulation protein A.